The following is a 459-amino-acid chain: UDP-N-acetylmuramoylalanine--D-glutamate ligase (459 aa).

119–125 is a binding site for ATP; that stretch reads GTNGKTT.

It belongs to the MurCDEF family.

It is found in the cytoplasm. The catalysed reaction is UDP-N-acetyl-alpha-D-muramoyl-L-alanine + D-glutamate + ATP = UDP-N-acetyl-alpha-D-muramoyl-L-alanyl-D-glutamate + ADP + phosphate + H(+). It participates in cell wall biogenesis; peptidoglycan biosynthesis. Cell wall formation. Catalyzes the addition of glutamate to the nucleotide precursor UDP-N-acetylmuramoyl-L-alanine (UMA). This is UDP-N-acetylmuramoylalanine--D-glutamate ligase from Lacticaseibacillus paracasei (strain ATCC 334 / BCRC 17002 / CCUG 31169 / CIP 107868 / KCTC 3260 / NRRL B-441) (Lactobacillus paracasei).